Here is a 443-residue protein sequence, read N- to C-terminus: Ribulose bisphosphate carboxylase large chain (443 aa).

The residue at position 7 (Lys7) is an N6,N6,N6-trimethyllysine. Residues Asn116 and Thr166 each contribute to the substrate site. The active-site Proton acceptor is the Lys168. Lys170 contributes to the substrate binding site. Residues Lys194, Asp196, and Glu197 each coordinate Mg(2+). Lys194 carries the post-translational modification N6-carboxylysine. Catalysis depends on His287, which acts as the Proton acceptor. The substrate site is built by Arg288, His320, and Ser372.

It belongs to the RuBisCO large chain family. Type I subfamily. As to quaternary structure, heterohexadecamer of 8 large chains and 8 small chains; disulfide-linked. The disulfide link is formed within the large subunit homodimers. Requires Mg(2+) as cofactor. Post-translationally, the disulfide bond which can form in the large chain dimeric partners within the hexadecamer appears to be associated with oxidative stress and protein turnover.

The protein localises to the plastid. It localises to the chloroplast. It carries out the reaction 2 (2R)-3-phosphoglycerate + 2 H(+) = D-ribulose 1,5-bisphosphate + CO2 + H2O. The catalysed reaction is D-ribulose 1,5-bisphosphate + O2 = 2-phosphoglycolate + (2R)-3-phosphoglycerate + 2 H(+). RuBisCO catalyzes two reactions: the carboxylation of D-ribulose 1,5-bisphosphate, the primary event in carbon dioxide fixation, as well as the oxidative fragmentation of the pentose substrate in the photorespiration process. Both reactions occur simultaneously and in competition at the same active site. This is Ribulose bisphosphate carboxylase large chain from Abies sachalinensis (Sakhalin fir).